The following is a 1073-amino-acid chain: Probable inorganic carbon transporter subunit DabA (1073 aa).

Positions 551, 553, 742, and 757 each coordinate Zn(2+).

The protein belongs to the inorganic carbon transporter (TC 9.A.2) DabA family. Forms a complex with DabB. Zn(2+) is required as a cofactor.

The protein resides in the cell inner membrane. Functionally, part of an energy-coupled inorganic carbon pump. In Methylococcus capsulatus (strain ATCC 33009 / NCIMB 11132 / Bath), this protein is Probable inorganic carbon transporter subunit DabA.